We begin with the raw amino-acid sequence, 1330 residues long: MLFYNKVMDRTAIKQLISRLITHFGITYTTYILDQLKTVGFKQATQAAISLGIDDLLTAPSKSWLIQDAEQQGYISEKHYRYGNVHAVEKLRQLIETWYATSEYLKQEMNPNFRMTDPLNPVHMMSFSGARGSTSQVHQLVGMRGLMSDPQGQIIDLPIQSNFREGLSLTEYIISCYGARKGVVDTAVRTSDAGYLTRRLVEVVQHIVVRKVDCGTSENIFVTPLQNNYKKNNKLIGRILADNIYINGRCIAIRNQDITTNLVISLINFQRKGIFIRSPLICKSMLWICQLCYGWSLTHGNLIELGEAVGIIAGQSIGEPGTQLTLRTFHTGGVFTGDIAEHIRTPFNGIIQFDTNSVYPTRTRHGHPAWICNNNLSVVIKSKKKLHNLVIPTQSLLLVQSNQYVESKQVIAEVRAKTSPFKEKVQKYIYSNLSGEMHWSSKVQHSSEYIHSNVHLLRKTGHIWILAGNFDKDNKFSFIFYQNQDKLDNKLPIAKQTLNYFQLKEHFLNNFWNSIYSSIILYNYRFLEKKNNKYEKKLLFQFMLKLPKNGILKQNDIFAIFNDPKYRIKNSGIIKYGNIKVDLINKKNDIFEDQKTKTVRPRYKILKEGNFFLLPEEVYILDQSSFSSILVKNNSFIKAGTKITFNISSKITGFVKIKKKFNNFKIKILPGSIYYPKEKQKNFKQNGILIPPGEKIFEQFRAKNWIYLEWIVLSKDNSFFLIRPAIEYKIIFNDNPLTLPIPFYLDLLKEQKKIKIQTVKYILYEDSEEVEINPDTDIQLIQTCLILNWETKVFIKEAHISFIKIRINKIIKNFFQINLIENINLMNKKKNNNIILNYLFKKKRYIINQKDCEKILLLSKTWGIIRTPSNKNQEKSFFLILSPFNLFQTILFDKTKQNLKIENNVEKLFTYEPKKIIKTFNIEKRKNFVEFLGLLGYLQNITKSFQLFSCKKFSDKSIPINFSIIDNLKKKIKISKWFFLNENKKVQKFFLTQNTILSLLNWSFPIFDLAKKKTQLFNLGHFFCDGLSIAEYPTFSESGQIIAIYDDLSLVIRLAKPYLATGGAIIHNNYGEIVKEGDILITLIYERLKSGDIIQGLPKVEQLLEARLTNPVSINLEKGFGEWNKDMTNFFGSLWGYFLSAQISMEQSQVNLVNQIQKVYRSQGVNISDKHIEIIVRQMTSKVFTLEDGMTNGFLPGELIEFARAKRMNRALEEVIPYKPVLLGITKASLNTQSFISEASFQETTRVLAKAALRGRIDWLKGLKENVILGGIIPTGTGCEEVLWQITLEKQKNILLKKNKSKLFHNKVKDIFLYKKLSISFTSEKIHKNY.

Cysteine 214, cysteine 282, cysteine 289, and cysteine 292 together coordinate Zn(2+).

The protein belongs to the RNA polymerase beta' chain family. RpoC2 subfamily. As to quaternary structure, in plastids the minimal PEP RNA polymerase catalytic core is composed of four subunits: alpha, beta, beta', and beta''. When a (nuclear-encoded) sigma factor is associated with the core the holoenzyme is formed, which can initiate transcription. It depends on Zn(2+) as a cofactor.

The protein resides in the plastid. It localises to the chloroplast. The catalysed reaction is RNA(n) + a ribonucleoside 5'-triphosphate = RNA(n+1) + diphosphate. Functionally, DNA-dependent RNA polymerase catalyzes the transcription of DNA into RNA using the four ribonucleoside triphosphates as substrates. This is DNA-directed RNA polymerase subunit beta'' from Physcomitrium patens (Spreading-leaved earth moss).